The primary structure comprises 354 residues: UDP-3-O-acylglucosamine N-acyltransferase (354 aa).

The active-site Proton acceptor is His-245.

The protein belongs to the transferase hexapeptide repeat family. LpxD subfamily. As to quaternary structure, homotrimer.

The enzyme catalyses a UDP-3-O-[(3R)-3-hydroxyacyl]-alpha-D-glucosamine + a (3R)-hydroxyacyl-[ACP] = a UDP-2-N,3-O-bis[(3R)-3-hydroxyacyl]-alpha-D-glucosamine + holo-[ACP] + H(+). It participates in bacterial outer membrane biogenesis; LPS lipid A biosynthesis. Functionally, catalyzes the N-acylation of UDP-3-O-acylglucosamine using 3-hydroxyacyl-ACP as the acyl donor. Is involved in the biosynthesis of lipid A, a phosphorylated glycolipid that anchors the lipopolysaccharide to the outer membrane of the cell. The chain is UDP-3-O-acylglucosamine N-acyltransferase from Anaeromyxobacter dehalogenans (strain 2CP-1 / ATCC BAA-258).